We begin with the raw amino-acid sequence, 193 residues long: Lipopolysaccharide core heptose(II)-phosphate phosphatase (193 aa).

A signal peptide spans 1-25; that stretch reads MKLKKHVAVLLISFLCLIGLVTQHA.

Belongs to the phosphoglycerate mutase family. Ais subfamily.

Its subcellular location is the periplasm. It participates in bacterial outer membrane biogenesis; lipopolysaccharide metabolism. Catalyzes the dephosphorylation of heptose(II) of the outer membrane lipopolysaccharide core. The protein is Lipopolysaccharide core heptose(II)-phosphate phosphatase of Escherichia fergusonii (strain ATCC 35469 / DSM 13698 / CCUG 18766 / IAM 14443 / JCM 21226 / LMG 7866 / NBRC 102419 / NCTC 12128 / CDC 0568-73).